The following is a 415-amino-acid chain: MFSLEAWIGLRYLRAKKRNGFMSFITMVSIAGIALGVTALIVVLSVMNGFQKEIRGQLLNVAPHAEIGYIDNTDTDWRNLLRFTENRKGILAAAPYVSNQALLANAGEIRGVQMRGILPSEERKVVEYGDKMPAGKFEDLIPGEFDIILGVGLAEALGAEVGNKVTVITPEGNVTPAGVVPRLKQFTVVGLVKTGVYEVDNSLAMTHIQDARVLYRLDKEVAGLRLKLADPQNAPALTATLIPEAQRDAVWVRDWTYSNRSYFEAVELEKRMMFIILTLIIAVAAFNLVSSLVMAVTEKQADIAILRTLGLSPAGVMKIFMVQGAFSGFFGTLAGVVCGVLLGWNVGRVVAFFENLLGVHLINSQVYFIDYLPSDVDMGDVALIACISLGLSFVATLYPSRRASKTQPAEALRYE.

The next 4 membrane-spanning stretches (helical) occupy residues 24 to 44, 273 to 293, 324 to 344, and 378 to 398; these read FITM…IVVL, MFII…SSLV, GAFS…LLGW, and MGDV…ATLY.

The protein belongs to the ABC-4 integral membrane protein family. LolC/E subfamily.

The protein localises to the cell inner membrane. Its function is as follows. Part of an ATP-dependent transport system responsible for the release of lipoproteins targeted to the outer membrane from the inner membrane. Such a release is dependent of the sorting-signal (absence of an Asp at position 2 of the mature lipoprotein) and of LolA. This Neisseria meningitidis serogroup B (strain ATCC BAA-335 / MC58) protein is Lipoprotein-releasing system transmembrane protein LolC (lolC).